The following is a 37-amino-acid chain: Large ribosomal subunit protein bL36 (37 aa).

It belongs to the bacterial ribosomal protein bL36 family.

The polypeptide is Large ribosomal subunit protein bL36 (Marinomonas sp. (strain MWYL1)).